A 349-amino-acid chain; its full sequence is Sphingolipid C4-hydroxylase SUR2 (349 aa).

Helical transmembrane passes span Ala-9–Ala-29, Val-50–Ile-70, Phe-99–Phe-119, Ile-148–Val-168, and Pro-209–Leu-229. Residues Phe-162 to Thr-297 form the Fatty acid hydroxylase domain.

It belongs to the sterol desaturase family.

Its subcellular location is the endoplasmic reticulum membrane. The catalysed reaction is sphinganine + 2 Fe(II)-[cytochrome b5] + O2 + 2 H(+) = (4R)-hydroxysphinganine + 2 Fe(III)-[cytochrome b5] + H2O. It carries out the reaction an N-acylsphinganine + 2 Fe(II)-[cytochrome b5] + O2 + 2 H(+) = an N-acyl-(4R)-4-hydroxysphinganine + 2 Fe(III)-[cytochrome b5] + H2O. The enzyme catalyses an N-acyleicosasphinganine + 2 Fe(II)-[cytochrome b5] + O2 + 2 H(+) = N-acyl-4-hydroxyeicosasphinganine + 2 Fe(III)-[cytochrome b5] + H2O. It participates in membrane lipid metabolism; sphingolipid biosynthesis. Functionally, required for hydroxylation of C-4 in the sphingoid moiety of ceramide. Catalyzes the conversion of sphinganine to phytosphingosine in sphingolipid biosynthesis. Involved in the response to syringomycin. This is Sphingolipid C4-hydroxylase SUR2 (SUR2) from Saccharomyces cerevisiae (strain ATCC 204508 / S288c) (Baker's yeast).